Here is a 340-residue protein sequence, read N- to C-terminus: Probable rRNA-processing protein EBP2 homolog (340 aa).

The segment covering 1-10 (MVRKMNKLAK) has biased composition (basic residues). Disordered stretches follow at residues 1–59 (MVRK…DDDE) and 245–340 (HGLD…RGRR). 2 stretches are compositionally biased toward acidic residues: residues 23–37 (PESDSDGSEFDFDNA) and 46–59 (MDIEEVESDGDDDE). The stretch at 206-245 (QKEVLAAKNTEKKNLAEAVKKHKKGMKQQLEDMLNNVKRH) forms a coiled coil. Gly residues-rich tracts occupy residues 264-277 (GRGGAGRGGAGRGG) and 318-333 (PRGGFGGRGRGGGRGG).

It belongs to the EBP2 family.

It localises to the nucleus. It is found in the nucleolus. Its function is as follows. Required for the processing of the 27S pre-rRNA. The protein is Probable rRNA-processing protein EBP2 homolog of Caenorhabditis elegans.